A 323-amino-acid chain; its full sequence is Type II restriction enzyme BsoBI (323 aa).

3 residues coordinate Mg(2+): Asp212, Glu240, and Lys242.

Homodimer.

The enzyme catalyses Endonucleolytic cleavage of DNA to give specific double-stranded fragments with terminal 5'-phosphates.. Functionally, a P subtype restriction enzyme that recognizes the double-stranded sequence 5'-CYCGRG-3' and cleaves after C-1. This chain is Type II restriction enzyme BsoBI, found in Geobacillus stearothermophilus (Bacillus stearothermophilus).